Reading from the N-terminus, the 196-residue chain is Imidazole glycerol phosphate synthase subunit HisH (196 aa).

Residues Lys-2 to Leu-196 form the Glutamine amidotransferase type-1 domain. Catalysis depends on Cys-77, which acts as the Nucleophile. Catalysis depends on residues His-178 and Glu-180.

In terms of assembly, heterodimer of HisH and HisF.

It localises to the cytoplasm. The catalysed reaction is 5-[(5-phospho-1-deoxy-D-ribulos-1-ylimino)methylamino]-1-(5-phospho-beta-D-ribosyl)imidazole-4-carboxamide + L-glutamine = D-erythro-1-(imidazol-4-yl)glycerol 3-phosphate + 5-amino-1-(5-phospho-beta-D-ribosyl)imidazole-4-carboxamide + L-glutamate + H(+). The enzyme catalyses L-glutamine + H2O = L-glutamate + NH4(+). It participates in amino-acid biosynthesis; L-histidine biosynthesis; L-histidine from 5-phospho-alpha-D-ribose 1-diphosphate: step 5/9. IGPS catalyzes the conversion of PRFAR and glutamine to IGP, AICAR and glutamate. The HisH subunit catalyzes the hydrolysis of glutamine to glutamate and ammonia as part of the synthesis of IGP and AICAR. The resulting ammonia molecule is channeled to the active site of HisF. The protein is Imidazole glycerol phosphate synthase subunit HisH of Bacteroides fragilis (strain YCH46).